We begin with the raw amino-acid sequence, 186 residues long: RNA polymerase sigma factor NccH (186 aa).

A Polymerase core binding motif is present at residues 49 to 62; it reads DIVQDTFIAAWHAL. The H-T-H motif DNA-binding region spans 152–171; it reads HPEAAMALGTSAKAVESRVA.

The protein belongs to the sigma-70 factor family. ECF subfamily.

Its function is as follows. Sigma factors are initiation factors that promote the attachment of RNA polymerase to specific initiation sites and are then released. This sigma factor regulates the genes for a membrane-located efflux system that confers resistance to nickel, cobalt and cadmium. This is RNA polymerase sigma factor NccH (nccH) from Alcaligenes xylosoxydans xylosoxydans (Achromobacter xylosoxidans).